A 302-amino-acid chain; its full sequence is GATA transcription factor 28 (302 aa).

The disordered stretch occupies residues Asn-47–Val-66. One can recognise a Tify domain in the interval Gly-77–Gly-112. The segment at Ala-119–Arg-141 is disordered. A compositionally biased stretch (polar residues) spans Pro-126–Arg-141. Residues Arg-147–Ala-189 enclose the CCT domain. Residues Gln-217–Asn-273 form a GATA-type zinc finger.

Belongs to the type IV zinc-finger family. Class C subfamily. In terms of tissue distribution, predominantly expressed in shoot apices, inflorescences and roots.

The protein resides in the nucleus. Functionally, transcriptional activator that specifically binds 5'-GATA-3' or 5'-GAT-3' motifs within gene promoters. The polypeptide is GATA transcription factor 28 (GATA28) (Arabidopsis thaliana (Mouse-ear cress)).